Reading from the N-terminus, the 81-residue chain is RNA-binding protein Hfq (81 aa).

Residues 10-69 (DPFLNTLRREHVPVSIYLVNGIKLQGQIESFDQYVVLLRNTVTQMVYKHAISTIVPGRAV) enclose the Sm domain.

The protein belongs to the Hfq family. In terms of assembly, homohexamer.

RNA chaperone that binds small regulatory RNA (sRNAs) and mRNAs to facilitate mRNA translational regulation in response to envelope stress, environmental stress and changes in metabolite concentrations. Also binds with high specificity to tRNAs. In Variovorax paradoxus (strain S110), this protein is RNA-binding protein Hfq.